The chain runs to 335 residues: Glucokinase (335 aa).

11 to 16 (ADIGGT) provides a ligand contact to ATP.

It belongs to the bacterial glucokinase family.

The protein localises to the cytoplasm. It catalyses the reaction D-glucose + ATP = D-glucose 6-phosphate + ADP + H(+). This chain is Glucokinase, found in Stenotrophomonas maltophilia (strain R551-3).